A 349-amino-acid polypeptide reads, in one-letter code: Paired box protein Pax-4 (349 aa).

The segment at residues 5–131 (GLSSVNQLGG…SSINRVLRAL (127 aa)) is a DNA-binding region (paired). The interval 8–64 (SVNQLGGLFVNGRPLPLDTRQQIVQLAIRGMRPCDISRSLKVSNGCVSKILGRYYRT) is PAI subdomain. Positions 83–131 (AVVARIAQLKDEYPALFAWEIQHQLCTEGLCTQDKAPSVSSINRVLRAL) are RED subdomain. Positions 170-229 (SHRNRTIFSPGQAEALEKEFQRGQYPDSVARGKLAAATSLPEDTVRVWFSNRRAKWRRQE) form a DNA-binding region, homeobox. A transcription repression region spans residues 278 to 349 (FCQLCCGTAP…VPSTHCSNWP (72 aa)).

This sequence belongs to the paired homeobox family. In terms of tissue distribution, expressed in early pancreas. Later restricted to beta cells. Undetectable in adult islets.

Its subcellular location is the nucleus. Functionally, plays an important role in the differentiation and development of pancreatic islet beta cells. Transcriptional repressor that competes with PAX6 in binding to a common element in the glucagon, insulin and somatostatin promoters. The sequence is that of Paired box protein Pax-4 (Pax4) from Mus musculus (Mouse).